We begin with the raw amino-acid sequence, 274 residues long: Rhamnulose-1-phosphate aldolase (274 aa).

E117 is a catalytic residue. Zn(2+)-binding residues include H141, H143, and H212.

It belongs to the aldolase class II family. RhaD subfamily. In terms of assembly, homotetramer. Zn(2+) serves as cofactor.

It is found in the cytoplasm. It carries out the reaction L-rhamnulose 1-phosphate = (S)-lactaldehyde + dihydroxyacetone phosphate. It functions in the pathway carbohydrate degradation; L-rhamnose degradation; glycerone phosphate from L-rhamnose: step 3/3. Catalyzes the reversible cleavage of L-rhamnulose-1-phosphate to dihydroxyacetone phosphate (DHAP) and L-lactaldehyde. The polypeptide is Rhamnulose-1-phosphate aldolase (Shigella dysenteriae serotype 1 (strain Sd197)).